We begin with the raw amino-acid sequence, 133 residues long: Probable nuclear transport factor 2 (133 aa).

The NTF2 domain occupies 10–128; that stretch reads VAKAFIQHYY…YFIGNEIFRL (119 aa).

It is found in the cytoplasm. Its function is as follows. Facilitates protein transport into the nucleus. Could be part of a multicomponent system of cytosolic factors that assemble at the pore complex during nuclear import. The chain is Probable nuclear transport factor 2 (ran-4) from Caenorhabditis elegans.